A 140-amino-acid polypeptide reads, in one-letter code: Secreted RxLR effector protein 37 (140 aa).

An N-terminal signal peptide occupies residues 1-22 (MTYRLPFVAVILFVTAKHVVLA). A RxLR-dEER motif is present at residues 57–76 (RFLRQLEKKPGVNDKRDEER).

The protein belongs to the RxLR effector family.

The protein resides in the secreted. It is found in the host nucleus. It localises to the host cytoplasm. Functionally, secreted effector that completely suppresses the host cell death induced by cell death-inducing proteins. The chain is Secreted RxLR effector protein 37 from Plasmopara viticola (Downy mildew of grapevine).